We begin with the raw amino-acid sequence, 319 residues long: Ribosomal RNA small subunit methyltransferase H (319 aa).

S-adenosyl-L-methionine is bound by residues 37-39 (GGH), Asp56, Leu90, Asp104, and Gln111.

This sequence belongs to the methyltransferase superfamily. RsmH family.

The protein resides in the cytoplasm. It carries out the reaction cytidine(1402) in 16S rRNA + S-adenosyl-L-methionine = N(4)-methylcytidine(1402) in 16S rRNA + S-adenosyl-L-homocysteine + H(+). Specifically methylates the N4 position of cytidine in position 1402 (C1402) of 16S rRNA. The sequence is that of Ribosomal RNA small subunit methyltransferase H from Nocardioides sp. (strain ATCC BAA-499 / JS614).